The following is a 512-amino-acid chain: MVWEVKSNQMPDAVQKLLLVMDKRAPGVSDSLQLLQCKETLPSSPGYNSCDEHMELDDLPELQAVQSDPTPSAIYQLSSDVSHQEYPRPSWNQNTSEISENTYRENEVDWLTELANIATSPQSPLMQCSFYNRSSPVHIIATSKSLHSYARPPPVASSKGEPAFPHHWKEQTPVRHERANSESESGIFCMSSLSDDDDLGWCNSWPSTAWHCFLKGTRLCFHKGSNKEWQNVEDFARTEGCDNEEDLQMGTHKDYGSDGLKLLSHEESVSFGESVLKLTFDPGTVEDGLLTVECKLDHPFYVKNKGWSSFYPSLTVVQHGIPCCEIHIGDVCLPPGHPDAINFDDSGVFDTFKSYDFTPMDSSAVYVLSSMARQRRASLSCGGPGGQDFERSGFSKNCGSPGSSQLSSSSLYAKAVKTHSSGTVSATSPNKCKRPMNAFMLFAKKYRVEYTQMYPGKDNRAISVILGDRWKKMKNEERRMYTLEAKALAEEQKRLNPDCWKRKRTNSGSQQH.

A disordered region spans residues 151–180 (RPPPVASSKGEPAFPHHWKEQTPVRHERAN). Residues 167–180 (HWKEQTPVRHERAN) are compositionally biased toward basic and acidic residues. One can recognise an AXH domain in the interval 201-343 (WCNSWPSTAW…PPGHPDAINF (143 aa)). The segment at residues 432–500 (CKRPMNAFML…EQKRLNPDCW (69 aa)) is a DNA-binding region (HMG box).

In terms of assembly, binds TCF4. Binds RB1. Binds the second PAH repeat of SIN3A. Post-translationally, ubiquitinated by the CTLH E3 ubiquitin-protein ligase complex, leading to subsequent proteasomal degradation.

It localises to the nucleus. Functionally, transcriptional repressor that binds to the promoter region of target genes. Plays a role in the regulation of the cell cycle and of the Wnt pathway. Binds preferentially to the sequence 5'-TTCATTCATTCA-3'. Binding to the histone H1.0 promoter is enhanced by interaction with RB1. Disrupts the interaction between DNA and TCF4. The sequence is that of HMG box-containing protein 1 (HBP1) from Bos taurus (Bovine).